The primary structure comprises 263 residues: METAVNAKSPRNEKVLNCLYQNPDAVFKLICFPWAGGGSIHFAKWGQKINDSLEVHAVRLAGRETRLGEPFANDIYQIADEIVTALLPIIQDKAFAFFGHSFGSYIALITALLLKEKYKMEPLHIFVSGASAPHSTSRPQVPDLNELTEEQVRHHLLDFGGTPKHLIEDQDVLRMFIPLLKADAGVVKKFIFDKPSKALLSLDITGFLGSEDTIKDIEGWQDLTSGKFDVHMLPGDHFYLMKPDNENFIKNYIAKCLELSSLT.

Met-1 bears the N-acetylmethionine mark. Catalysis depends on residues Ser-101 and His-237. Residues 262–263 are important for interaction with FASN; that stretch reads LT.

The protein belongs to the thioesterase family. In terms of assembly, interacts (via C-terminus) with FASN.

It is found in the cytoplasm. The protein localises to the cytosol. The catalysed reaction is (9Z)-octadecenoyl-[ACP] + H2O = (9Z)-octadecenoate + holo-[ACP] + H(+). It catalyses the reaction decanoyl-CoA + H2O = decanoate + CoA + H(+). It carries out the reaction dodecanoyl-CoA + H2O = dodecanoate + CoA + H(+). The enzyme catalyses tetradecanoyl-CoA + H2O = tetradecanoate + CoA + H(+). The catalysed reaction is hexadecanoyl-CoA + H2O = hexadecanoate + CoA + H(+). In terms of biological role, contributes to the release of free fatty acids from fatty acid synthase (FASN). Has broad substrate specificity, giving rise to a range of free fatty acids with chain lengths between 10 and 16 carbon atoms (C10 - C16). This is S-acyl fatty acid synthase thioesterase, medium chain from Rattus norvegicus (Rat).